The sequence spans 160 residues: Dysbindin domain-containing protein 1 (160 aa).

Ser-3, Ser-97, and Ser-121 each carry phosphoserine. The interval 95–160 (ADSDDENLAT…FLTVEEPKED (66 aa)) is disordered. The segment covering 127–143 (TRAEQNREKQPPSDPER) has biased composition (basic and acidic residues).

The protein belongs to the dysbindin family.

The sequence is that of Dysbindin domain-containing protein 1 (Dbndd1) from Mus musculus (Mouse).